The sequence spans 112 residues: Nucleoid-associated protein FTN_1196 (112 aa).

The disordered stretch occupies residues 1–27; sequence MNFDMSKLMQQAQKMQEQMKKAQQERE. The span at 17–27 shows a compositional bias: basic and acidic residues; that stretch reads EQMKKAQQERE.

The protein belongs to the YbaB/EbfC family. Homodimer.

The protein localises to the cytoplasm. It is found in the nucleoid. Its function is as follows. Binds to DNA and alters its conformation. May be involved in regulation of gene expression, nucleoid organization and DNA protection. This Francisella tularensis subsp. novicida (strain U112) protein is Nucleoid-associated protein FTN_1196.